A 380-amino-acid chain; its full sequence is Serpin B7 (380 aa).

2 positions are modified to phosphoserine: serine 217 and serine 223.

It belongs to the serpin family. Ov-serpin subfamily. Predominantly expressed in mesangial cells. Expressed in the epidermis of the whole body.

The protein resides in the cytoplasm. Might function as an inhibitor of Lys-specific proteases. Might influence the maturation of megakaryocytes via its action as a serpin. This chain is Serpin B7 (SERPINB7), found in Homo sapiens (Human).